Consider the following 265-residue polypeptide: Eukaryotic translation initiation factor 3 subunit J (265 aa).

2 stretches are compositionally biased toward acidic residues: residues 1–12 (MAPERWDDEEDS) and 26–44 (DEEE…DSEV). Disordered regions lie at residues 1-113 (MAPE…DADL) and 212-265 (TMSN…DDFM). 2 stretches are compositionally biased toward basic and acidic residues: residues 45-65 (EREK…EAAA) and 73-86 (RIQE…KKAE). Residues 61-95 (AEAAAKKKSKSQRIQEHKEERKKKAEEEDSDSEEE) are a coiled coil. Residues 87–97 (EEDSDSEEEDD) are compositionally biased toward acidic residues. A compositionally biased stretch (basic and acidic residues) spans 216 to 228 (EKMREERAADKGS). The segment covering 251–265 (DYDNGDDGLGDDDFM) has biased composition (acidic residues).

The protein belongs to the eIF-3 subunit J family. As to quaternary structure, component of the eukaryotic translation initiation factor 3 (eIF-3) complex.

The protein resides in the cytoplasm. Functionally, component of the eukaryotic translation initiation factor 3 (eIF-3) complex, which is involved in protein synthesis of a specialized repertoire of mRNAs and, together with other initiation factors, stimulates binding of mRNA and methionyl-tRNAi to the 40S ribosome. The eIF-3 complex specifically targets and initiates translation of a subset of mRNAs involved in cell proliferation. The chain is Eukaryotic translation initiation factor 3 subunit J (hcr1) from Aspergillus oryzae (strain ATCC 42149 / RIB 40) (Yellow koji mold).